The chain runs to 526 residues: Peptide chain release factor 3 (526 aa).

The region spanning asparagine 9–glutamine 277 is the tr-type G domain. GTP is bound by residues serine 18–threonine 25, aspartate 86–histidine 90, and asparagine 140–aspartate 143.

Belongs to the TRAFAC class translation factor GTPase superfamily. Classic translation factor GTPase family. PrfC subfamily.

It is found in the cytoplasm. Functionally, increases the formation of ribosomal termination complexes and stimulates activities of RF-1 and RF-2. It binds guanine nucleotides and has strong preference for UGA stop codons. It may interact directly with the ribosome. The stimulation of RF-1 and RF-2 is significantly reduced by GTP and GDP, but not by GMP. The chain is Peptide chain release factor 3 from Legionella pneumophila (strain Paris).